The primary structure comprises 1695 residues: Protein TOPAZ1 (1695 aa).

3 disordered regions span residues 1-128 (MRRH…DDPQ), 441-474 (MAQTEDFKSMKSSIGKSPNEYHIEKRSSQEELRR), and 725-753 (AEVRQNRSKESVSMTTSGPQTLSIQNSVT). Basic residues predominate over residues 43–52 (RRKNRQKRRM). Composition is skewed to basic and acidic residues over residues 59-68 (GKDKVERDRS), 92-113 (SDRRGIQAAKEAELRLQTERHT), and 459-474 (NEYHIEKRSSQEELRR). The span at 735 to 753 (SVSMTTSGPQTLSIQNSVT) shows a compositional bias: polar residues.

It is found in the cytoplasm. The protein localises to the cytosol. Functionally, important for normal spermatogenesis and male fertility. Specifically required for progression to the post-meiotic stages of spermatocyte development. Seems to be necessary for normal expression levels of a number of testis-expressed gene transcripts, although its role in this process is unclear. In Callithrix jacchus (White-tufted-ear marmoset), this protein is Protein TOPAZ1 (TOPAZ1).